We begin with the raw amino-acid sequence, 148 residues long: U5-hexatoxin-Hi1a (148 aa).

The signal sequence occupies residues 1–21; it reads MNFSVVAVALVVVLTVHFTDG. The propeptide occupies 22–38; that stretch reads QETSSSLPSPPSPLPGR. Residues 125-148 are disordered; the sequence is TPSTTVTTPTPTTETPTTETPSTP.

In terms of processing, contains 2 disulfide bonds. Expressed by the venom gland.

The protein resides in the secreted. Its function is as follows. Probable ion channel inhibitor. This Hadronyche infensa (Fraser island funnel-web spider) protein is U5-hexatoxin-Hi1a.